A 245-amino-acid chain; its full sequence is 4-hydroxy-tetrahydrodipicolinate reductase (245 aa).

Residues 7–12 (GAKGKV), 75–77 (GTT), and 102–105 (APNF) each bind NAD(+). The active-site Proton donor/acceptor is the His-132. Residue His-133 coordinates (S)-2,3,4,5-tetrahydrodipicolinate. Catalysis depends on Lys-136, which acts as the Proton donor. 142 to 143 (GT) contacts (S)-2,3,4,5-tetrahydrodipicolinate.

Belongs to the DapB family.

The protein resides in the cytoplasm. It catalyses the reaction (S)-2,3,4,5-tetrahydrodipicolinate + NAD(+) + H2O = (2S,4S)-4-hydroxy-2,3,4,5-tetrahydrodipicolinate + NADH + H(+). The enzyme catalyses (S)-2,3,4,5-tetrahydrodipicolinate + NADP(+) + H2O = (2S,4S)-4-hydroxy-2,3,4,5-tetrahydrodipicolinate + NADPH + H(+). The protein operates within amino-acid biosynthesis; L-lysine biosynthesis via DAP pathway; (S)-tetrahydrodipicolinate from L-aspartate: step 4/4. Catalyzes the conversion of 4-hydroxy-tetrahydrodipicolinate (HTPA) to tetrahydrodipicolinate. This chain is 4-hydroxy-tetrahydrodipicolinate reductase, found in Mycobacterium ulcerans (strain Agy99).